We begin with the raw amino-acid sequence, 261 residues long: Small ribosomal subunit protein eS1 (261 aa).

Residues 1–18 show a composition bias toward basic residues; sequence MAVGKNKRISKGKKGGKK. Residues 1–21 form a disordered region; that stretch reads MAVGKNKRISKGKKGGKKKAT.

The protein belongs to the eukaryotic ribosomal protein eS1 family. As to quaternary structure, component of the small ribosomal subunit. Mature ribosomes consist of a small (40S) and a large (60S) subunit. The 40S subunit contains about 33 different proteins and 1 molecule of RNA (18S). The 60S subunit contains about 49 different proteins and 3 molecules of RNA (25S, 5.8S and 5S).

It is found in the cytoplasm. The polypeptide is Small ribosomal subunit protein eS1 (cyc07) (Daucus carota (Wild carrot)).